The chain runs to 239 residues: tRNA (guanine-N(7)-)-methyltransferase (239 aa).

Residues E69, E94, D121, and D144 each contribute to the S-adenosyl-L-methionine site. Residue D144 is part of the active site. K148 serves as a coordination point for substrate. Residues 150–155 (RHNKRR) are interaction with RNA. Substrate is bound by residues D180 and 217-220 (TKFE).

Belongs to the class I-like SAM-binding methyltransferase superfamily. TrmB family. Monomer.

The enzyme catalyses guanosine(46) in tRNA + S-adenosyl-L-methionine = N(7)-methylguanosine(46) in tRNA + S-adenosyl-L-homocysteine. It functions in the pathway tRNA modification; N(7)-methylguanine-tRNA biosynthesis. In terms of biological role, catalyzes the formation of N(7)-methylguanine at position 46 (m7G46) in tRNA. The polypeptide is tRNA (guanine-N(7)-)-methyltransferase (Escherichia coli O6:H1 (strain CFT073 / ATCC 700928 / UPEC)).